Here is a 424-residue protein sequence, read N- to C-terminus: MEKFRVHGPFTLSGTVDISGAKNAALPILFAAVLATEPVTLTNVPDLKDVDTTFKILRKLGVVVERDESGAVQIDASKIDHYVAPYELVKTMRASIWALAPLVARFHEGQVSLPGGCTIGARPVDMHISGLEKMGSVIELDEGYVKATSNGRLHGARIYMDKVSVGATLSVMMAATLAEGTTTIENAAREPEIVDTALFLNAMGAKISGAGTDTITIEGVERLTGCQHRIVADRIETGTFLVAAAVSGGKITCRGTKADTLEAVIEKLREAGMEVTVTEDTITLDSKGQRPKAVNIRTMPHPGFPTDMQAQFTLLNVVAEGISRITETIFENRFMHIPELNRMGAKGEIEGNTAICHGVEKLKSAEVMATDLRASISLVLAGCIASGETIVDRIYHIDRGYEHIEDKLRGIGAKIERFSTKFEE.

Residue 22–23 participates in phosphoenolpyruvate binding; sequence KN. Arginine 93 is a binding site for UDP-N-acetyl-alpha-D-glucosamine. Residue cysteine 117 is the Proton donor of the active site. Cysteine 117 carries the 2-(S-cysteinyl)pyruvic acid O-phosphothioketal modification. Residues 162–165, aspartate 307, and isoleucine 329 each bind UDP-N-acetyl-alpha-D-glucosamine; that span reads KVSV.

The protein belongs to the EPSP synthase family. MurA subfamily.

It localises to the cytoplasm. The enzyme catalyses phosphoenolpyruvate + UDP-N-acetyl-alpha-D-glucosamine = UDP-N-acetyl-3-O-(1-carboxyvinyl)-alpha-D-glucosamine + phosphate. The protein operates within cell wall biogenesis; peptidoglycan biosynthesis. Functionally, cell wall formation. Adds enolpyruvyl to UDP-N-acetylglucosamine. In Actinobacillus pleuropneumoniae serotype 3 (strain JL03), this protein is UDP-N-acetylglucosamine 1-carboxyvinyltransferase.